Consider the following 448-residue polypeptide: Hyaluronidase conohyal-Cn1 (448 aa).

The signal sequence occupies residues 1-18; it reads MRAVVVVTGLVVVVVATA. A propeptide spanning residues 19–33 is cleaved from the precursor; that stretch reads LSLPNHDVKSATSSR. Residues 26 to 55 form a disordered region; it reads VKSATSSRSSSDYQGSSGDDCDEGLPPPDQ. Positions 31 to 43 are enriched in low complexity; the sequence is SSRSSSDYQGSSG. Cys-67 and Cys-344 are joined by a disulfide. N-linked (GlcNAc...) asparagine glycosylation occurs at Asn-141. Glu-151 (proton donor) is an active-site residue. Asn-169 and Asn-361 each carry an N-linked (GlcNAc...) asparagine glycan. Intrachain disulfides connect Cys-369-Cys-380, Cys-374-Cys-413, and Cys-415-Cys-424. The EGF-like domain occupies 413–424; that stretch reads CRCYSAWEGACC.

It belongs to the glycosyl hydrolase 56 family. As to expression, expressed by the venom duct.

It localises to the secreted. It carries out the reaction Random hydrolysis of (1-&gt;4)-linkages between N-acetyl-beta-D-glucosamine and D-glucuronate residues in hyaluronate.. In terms of biological role, hyaluronidase catalyzes the hydrolysis of hyaluronic acid (HA), an anionic, nonsulfated glycosaminoglycan distributed widely throughout connective, epithelial, and neural tissues. In venom, they are known to enhance diffusion of the venom by degrading the extracellular matrix. This is Hyaluronidase conohyal-Cn1 from Conus consors (Singed cone).